The primary structure comprises 177 residues: Isopentenyl-diphosphate Delta-isomerase 1 (177 aa).

His24 and His30 together coordinate Mn(2+). The Nudix hydrolase domain occupies 28–160 (SLHRAISIFI…PHAYSFWLEA (133 aa)). Cys65 is a catalytic residue. Cys65 lines the Mg(2+) pocket. His67 provides a ligand contact to Mn(2+). Mg(2+) is bound at residue Glu85. The Mn(2+) site is built by Glu110 and Glu112. The active site involves Glu112.

This sequence belongs to the IPP isomerase type 1 family. Requires Mg(2+) as cofactor. It depends on Mn(2+) as a cofactor.

The protein localises to the cytoplasm. It carries out the reaction isopentenyl diphosphate = dimethylallyl diphosphate. It participates in isoprenoid biosynthesis; dimethylallyl diphosphate biosynthesis; dimethylallyl diphosphate from isopentenyl diphosphate: step 1/1. In terms of biological role, catalyzes the 1,3-allylic rearrangement of the homoallylic substrate isopentenyl (IPP) to its highly electrophilic allylic isomer, dimethylallyl diphosphate (DMAPP). This chain is Isopentenyl-diphosphate Delta-isomerase 1, found in Aromatoleum aromaticum (strain DSM 19018 / LMG 30748 / EbN1) (Azoarcus sp. (strain EbN1)).